Reading from the N-terminus, the 262-residue chain is Small ribosomal subunit protein uS2 (262 aa).

Positions 240–262 (NLDEKEESQEAESTEENTTVESN) are disordered. A compositionally biased stretch (acidic residues) spans 243–254 (EKEESQEAESTE).

It belongs to the universal ribosomal protein uS2 family.

This is Small ribosomal subunit protein uS2 from Staphylococcus haemolyticus (strain JCSC1435).